A 191-amino-acid chain; its full sequence is Protein GrpE (191 aa).

Basic and acidic residues predominate over residues methionine 1–serine 19. Residues methionine 1 to isoleucine 44 are disordered.

This sequence belongs to the GrpE family. As to quaternary structure, homodimer.

It localises to the cytoplasm. In terms of biological role, participates actively in the response to hyperosmotic and heat shock by preventing the aggregation of stress-denatured proteins, in association with DnaK and GrpE. It is the nucleotide exchange factor for DnaK and may function as a thermosensor. Unfolded proteins bind initially to DnaJ; upon interaction with the DnaJ-bound protein, DnaK hydrolyzes its bound ATP, resulting in the formation of a stable complex. GrpE releases ADP from DnaK; ATP binding to DnaK triggers the release of the substrate protein, thus completing the reaction cycle. Several rounds of ATP-dependent interactions between DnaJ, DnaK and GrpE are required for fully efficient folding. In Helicobacter pylori (strain G27), this protein is Protein GrpE.